A 503-amino-acid polypeptide reads, in one-letter code: Poxin-Schlafen (503 aa).

The Proton donor role is filled by histidine 15. The Shared with catalytic histidine of dimeric partner role is filled by tyrosine 136. Residue lysine 140 is the Proton acceptor; shared with catalytic histidine of dimeric partner of the active site.

This sequence in the N-terminal section; belongs to the poxin family. In the C-terminal section; belongs to the Schlafen protein family. Subgroup poxviridae B3 subfamily. Homodimer.

The catalysed reaction is 2',3'-cGAMP + H2O = Gp(2'-5')Ap(3') + H(+). Its function is as follows. Nuclease that is responsible for viral evasion of host cGAS-STING innate immunity. Cleaves 2',3'-cGAMP which is produced by host cGAS following recognition of cytosolic DNA and blocks the subsequent 2',3'-cGAMP-mediated activation of TMEM173/STING, which normally spreads to adjacent cells and activates the interferon and NF-kappa-B immune responses. The chain is Poxin-Schlafen (OPG188) from Cynomys gunnisoni (Gunnison's prairie dog).